The chain runs to 69 residues: MKQGIHPEYHTDAVVKCACGNSFTTGSVKEELKVEICSKCHPFFTGKQKIVDVGGRVEKFNKRFNLDTK.

Positions 17, 19, 37, and 40 each coordinate Zn(2+).

The protein belongs to the bacterial ribosomal protein bL31 family. Type A subfamily. Part of the 50S ribosomal subunit. Zn(2+) serves as cofactor.

In terms of biological role, binds the 23S rRNA. This is Large ribosomal subunit protein bL31 from Clostridium botulinum (strain Eklund 17B / Type B).